Reading from the N-terminus, the 1133-residue chain is uncharacterized protein (1133 aa).

Disordered regions lie at residues 33–83, 305–629, 679–723, and 736–817; these read QFED…NSSS, PVSN…NSNS, GKLD…SVKR, and IESP…SEEV. Residues 39-83 are compositionally biased toward low complexity; it reads NNNNSNNNNNNNNSNNNNSNNNENINRKTGSTLLSSSTSQLNSSS. A DNA-binding region (NDT80) is located at residues 40-308; the sequence is NNNSNNNNNN…GHPTCNPVSN (269 aa). The span at 305-316 shows a compositional bias: polar residues; sequence PVSNNPSTPGTP. Low complexity predominate over residues 317–384; it reads ISNFDSSNNN…NNNSSGNSSS (68 aa). The segment covering 401 to 417 has biased composition (polar residues); it reads INSLSNHNSPHLTPIQY. Low complexity predominate over residues 418 to 452; it reads NNNNNNSNNNSNNNNNNNNNNNNSNNNNNNSNNNN. A compositionally biased stretch (polar residues) spans 453–470; that stretch reads HQFQSNNRIFKGNLSNPF. Low complexity-rich tracts occupy residues 473–615 and 686–714; these read NYSQ…GNNS and NNSN…NNNN. Positions 736 to 747 are enriched in polar residues; it reads IESPQSYISSPT. Residues 757–771 are compositionally biased toward pro residues; it reads QPQPQPQPQPQPQPQ. Residues 772–808 show a composition bias toward low complexity; sequence PQSQSQSQSQSQSQSQSQSQSQSQPIQQIVQQQLSSP. Positions 909–1020 constitute a Peptidase S74 domain; that stretch reads SDKRVKENVK…KKVDNVCMEL (112 aa). A helical membrane pass occupies residues 1055–1075; the sequence is IFIGIGVFTLFVIFGLVAVSI. Residues 1107–1133 are disordered; it reads SGSNSCYDSSSNSAIDTTTSTGSGSIK.

The protein localises to the membrane. This is an uncharacterized protein from Dictyostelium discoideum (Social amoeba).